The sequence spans 330 residues: GTP 3',8-cyclase (330 aa).

The Radical SAM core domain occupies 14-225; that stretch reads RFGRTVDYVR…RERLADAYPE (212 aa). A GTP-binding site is contributed by R23. Residues C30 and C34 each contribute to the [4Fe-4S] cluster site. S-adenosyl-L-methionine is bound at residue Y36. Residue C37 coordinates [4Fe-4S] cluster. R70 provides a ligand contact to GTP. G74 provides a ligand contact to S-adenosyl-L-methionine. T101 is a binding site for GTP. S125 provides a ligand contact to S-adenosyl-L-methionine. Residue K162 participates in GTP binding. Residues C259 and C262 each contribute to the [4Fe-4S] cluster site. 264–266 is a GTP binding site; that stretch reads KLR. C276 lines the [4Fe-4S] cluster pocket. The span at 309–318 shows a compositional bias: basic and acidic residues; sequence KPKDGLKSSH. Residues 309–330 are disordered; the sequence is KPKDGLKSSHDTAASSMSQIGG. A compositionally biased stretch (polar residues) spans 319 to 330; that stretch reads DTAASSMSQIGG.

The protein belongs to the radical SAM superfamily. MoaA family. Monomer and homodimer. It depends on [4Fe-4S] cluster as a cofactor.

It carries out the reaction GTP + AH2 + S-adenosyl-L-methionine = (8S)-3',8-cyclo-7,8-dihydroguanosine 5'-triphosphate + 5'-deoxyadenosine + L-methionine + A + H(+). It functions in the pathway cofactor biosynthesis; molybdopterin biosynthesis. In terms of biological role, catalyzes the cyclization of GTP to (8S)-3',8-cyclo-7,8-dihydroguanosine 5'-triphosphate. The protein is GTP 3',8-cyclase of Chlorobaculum tepidum (strain ATCC 49652 / DSM 12025 / NBRC 103806 / TLS) (Chlorobium tepidum).